The chain runs to 653 residues: MAESGDFNGGQPPPHSPLRTTSSGSSSSNNRGPPPPPPPPLVMVRKRLASEMSSNPDYNNSSRPPRRVSHLLDSNYNTVTPQQPPSLTAAATVSSQPNPPLSVCGFSGLPVFPSDRGGRNVMMSVQPMDQDSSSSSASPTVWVDAIIRDLIHSSTSVSIPQLIQNVRDIIFPCNPNLGALLEYRLRSLMLLDPSSSSDPSPQTFEPLYQISNNPSPPQQQQQHQQQQQQHKPPPPPIQQQERENSSTDAPPQPETVTATVPAVQTNTAEALRERKEEIKRQKQDEEGLHLLTLLLQCAEAVSADNLEEANKLLLEISQLSTPYGTSAQRVAAYFSEAMSARLLNSCLGIYAALPSRWMPQTHSLKMVSAFQVFNGISPLVKFSHFTANQAIQEAFEKEDSVHIIDLDIMQGLQWPGLFHILASRPGGPPHVRLTGLGTSMEALQATGKRLSDFADKLGLPFEFCPLAEKVGNLDTERLNVRKREAVAVHWLQHSLYDVTGSDAHTLWLLQRLAPKVVTVVEQDLSHAGSFLGRFVEAIHYYSALFDSLGASYGEESEERHVVEQQLLSKEIRNVLAVGGPSRSGEVKFESWREKMQQCGFKGISLAGNAATQATLLLGMFPSDGYTLVDDNGTLKLGWKDLSLLTASAWTPRS.

Disordered stretches follow at residues 1 to 69 (MAES…RRVS) and 193 to 265 (PSSS…AVQT). The segment covering 17-31 (PLRTTSSGSSSSNNR) has biased composition (low complexity). The span at 32-41 (GPPPPPPPPL) shows a compositional bias: pro residues. Residues 51 to 63 (EMSSNPDYNNSSR) are compositionally biased toward polar residues. Positions 209–230 (QISNNPSPPQQQQQHQQQQQQH) are enriched in low complexity. A compositionally biased stretch (polar residues) spans 246 to 265 (STDAPPQPETVTATVPAVQT). The GRAS domain occupies 281–650 (QKQDEEGLHL…LSLLTASAWT (370 aa)). The interval 288–351 (LHLLTLLLQC…LLNSCLGIYA (64 aa)) is leucine repeat I (LRI). Positions 295–299 (LQCAE) match the LxCxE motif motif. Positions 370–435 (FQVFNGISPL…GGPPHVRLTG (66 aa)) are VHIID. A VHIID motif is present at residues 401 to 405 (VHIID). Positions 445 to 477 (ATGKRLSDFADKLGLPFEFCPLAEKVGNLDTER) are leucine repeat II (LRII). The interval 486 to 573 (VAVHWLQHSL…QQLLSKEIRN (88 aa)) is PFYRE. Residues 576-650 (AVGGPSRSGE…LSLLTASAWT (75 aa)) are SAW.

Belongs to the GRAS family. Interacts with SHR, JKD and MGP. Interacts with SIEL. Interacts with RBR1 through its the LxCxE motif. Expressed in siliques, leaves and roots. Detected in the initial daughter cell before its asymmetric division and remains expressed only in the endodermal cell layer after the division. Expressed in the endodermis or starch sheath of the seedling hypocotyl, in the leaf bundle sheath cells and the root quiescent center.

The protein localises to the nucleus. Functionally, transcription factor required for quiescent center cells specification and maintenance of surrounding stem cells, and for the asymmetric cell division involved in radial pattern formation in roots. Essential for cell division but not differentiation of the ground tissue. Also required for normal shoot gravitropism. Regulates the radial organization of the shoot axial organs. Binds to the promoter of MGP, NUC, RLK and SCL3. Restricts SHR movment and sequesters it into the nucleus of the endodermis. This chain is Protein SCARECROW, found in Arabidopsis thaliana (Mouse-ear cress).